Reading from the N-terminus, the 541-residue chain is Chaperonin GroEL (541 aa).

ATP contacts are provided by residues 30–33 (TLGP), K51, 87–91 (DGTTT), G415, 479–481 (NAA), and D495.

This sequence belongs to the chaperonin (HSP60) family. In terms of assembly, forms a cylinder of 14 subunits composed of two heptameric rings stacked back-to-back. Interacts with the co-chaperonin GroES.

The protein localises to the cytoplasm. It catalyses the reaction ATP + H2O + a folded polypeptide = ADP + phosphate + an unfolded polypeptide.. In terms of biological role, together with its co-chaperonin GroES, plays an essential role in assisting protein folding. The GroEL-GroES system forms a nano-cage that allows encapsulation of the non-native substrate proteins and provides a physical environment optimized to promote and accelerate protein folding. This is Chaperonin GroEL from Acinetobacter baumannii (strain SDF).